Reading from the N-terminus, the 425-residue chain is Histidine--tRNA ligase (425 aa).

Belongs to the class-II aminoacyl-tRNA synthetase family. In terms of assembly, homodimer.

The protein resides in the cytoplasm. It carries out the reaction tRNA(His) + L-histidine + ATP = L-histidyl-tRNA(His) + AMP + diphosphate + H(+). This is Histidine--tRNA ligase from Tolumonas auensis (strain DSM 9187 / NBRC 110442 / TA 4).